Consider the following 760-residue polypeptide: ER membrane protein complex subunit 1 (760 aa).

A signal peptide spans Met-1 to Ala-24. Topologically, residues Val-25–Pro-723 are lumenal. 8 N-linked (GlcNAc...) asparagine glycosylation sites follow: Asn-73, Asn-106, Asn-192, Asn-202, Asn-420, Asn-443, Asn-574, and Asn-578. Residues Thr-724–Ile-744 traverse the membrane as a helical segment. Topologically, residues Arg-745–Lys-760 are cytoplasmic.

This sequence belongs to the EMC1 family. Component of the ER membrane protein complex (EMC), which is composed of EMC1, EMC2, EMC3, EMC4, EMC5 and EMC6. N-glycosylated.

The protein localises to the endoplasmic reticulum membrane. In terms of biological role, part of the endoplasmic reticulum membrane protein complex (EMC) that enables the energy-independent insertion into endoplasmic reticulum membranes of newly synthesized membrane proteins. Preferentially accommodates proteins with transmembrane domains that are weakly hydrophobic or contain destabilizing features such as charged and aromatic residues. Involved in the cotranslational insertion of multi-pass membrane proteins in which stop-transfer membrane-anchor sequences become ER membrane spanning helices. It is also required for the post-translational insertion of tail-anchored/TA proteins in endoplasmic reticulum membranes. By mediating the proper cotranslational insertion of N-terminal transmembrane domains in an N-exo topology, with translocated N-terminus in the lumen of the ER, controls the topology of multi-pass membrane proteins. This chain is ER membrane protein complex subunit 1 (EMC1), found in Saccharomyces cerevisiae (strain ATCC 204508 / S288c) (Baker's yeast).